Reading from the N-terminus, the 131-residue chain is MAYSPSLNDIKSILNKYTSKDYELKCENRYDGKLELWLKGVFEEIVKTPGTRYVTHKQLDEKLKNFVTKTEFKEFQTVVMESFAVQNQNIDAQGEQIKELQVEQKAQGKTLQLILEALQGINKRLDNLESK.

The protein belongs to the UPF0134 family.

In Mycoplasma pneumoniae (strain ATCC 29342 / M129 / Subtype 1) (Mycoplasmoides pneumoniae), this protein is UPF0134 protein MPN_010.